We begin with the raw amino-acid sequence, 237 residues long: MQLARGTVGGRGCALFPLLSILVVQGARIVLSLEISADAHVRGYVGEKIKLKCTFKSSSDVTDKLTIDWTYRPPSSSRTESIFHYQSFQYPTTAGTFRDRISWAGNVYKGDASISISNPTLKDNGTFSCAVKNPPDVYHNIPLTELTVTERGFGTMLSSVALLSILVFVPSAVVVILLLVRMGRKATGVQKRSRSGYKKSSIEVSDDTDQEDSNDCMTRLCVRCAECLDSDYEEEAY.

Positions 1-32 (MQLARGTVGGRGCALFPLLSILVVQGARIVLS) are cleaved as a signal peptide. An Ig-like V-type domain is found at 33–149 (LEISADAHVR…NIPLTELTVT (117 aa)). At 33–159 (LEISADAHVR…ERGFGTMLSS (127 aa)) the chain is on the extracellular side. A disulfide bond links Cys53 and Cys129. Asn124 carries an N-linked (GlcNAc...) asparagine glycan. Residues 160 to 180 (VALLSILVFVPSAVVVILLLV) traverse the membrane as a helical segment. Residues 181-237 (RMGRKATGVQKRSRSGYKKSSIEVSDDTDQEDSNDCMTRLCVRCAECLDSDYEEEAY) are Cytoplasmic-facing.

Belongs to the myelin P0 protein family. In terms of tissue distribution, present in all tissues tested, including the skin. Present in the keratinocytes and sebocytes in the skin (at protein level).

The protein localises to the membrane. In terms of biological role, mediates homophilic cell-cell adhesion. The chain is Myelin protein zero-like protein 3 (Mpzl3) from Mus musculus (Mouse).